Reading from the N-terminus, the 57-residue chain is COP9 signalosome complex subunit 9 (57 aa).

This sequence belongs to the CSN9 family. Component of the CSN complex, probably composed of cops1, cops2, cops3, cops4, cops5, cops6, cops7, cops8 and cops9.

It localises to the nucleus. It is found in the cytoplasm. The protein resides in the nucleoplasm. In terms of biological role, component of the COP9 signalosome complex (CSN), a complex involved in various cellular and developmental processes. The CSN complex is an essential regulator of the ubiquitin (Ubl) conjugation pathway by mediating the deneddylation of the cullin subunits of SCF-type E3 ligase complexes, leading to decrease the Ubl ligase activity. May play a role in cell proliferation. The chain is COP9 signalosome complex subunit 9 from Xenopus tropicalis (Western clawed frog).